A 264-amino-acid chain; its full sequence is DNA-directed RNA polymerase subunit Rpo3 (264 aa).

Residues cysteine 203, cysteine 206, and cysteine 209 each contribute to the [3Fe-4S] cluster site.

The protein belongs to the archaeal Rpo3/eukaryotic RPB3 RNA polymerase subunit family. Part of the RNA polymerase complex. The cofactor is [3Fe-4S] cluster.

It is found in the cytoplasm. The enzyme catalyses RNA(n) + a ribonucleoside 5'-triphosphate = RNA(n+1) + diphosphate. In terms of biological role, DNA-dependent RNA polymerase (RNAP) catalyzes the transcription of DNA into RNA using the four ribonucleoside triphosphates as substrates. The polypeptide is DNA-directed RNA polymerase subunit Rpo3 (Archaeoglobus fulgidus (strain ATCC 49558 / DSM 4304 / JCM 9628 / NBRC 100126 / VC-16)).